Consider the following 1415-residue polypeptide: MKALLDLFKQVQQEEQFDAIKIGLASPEKIRSWSYGEVKKPETINYRTFKPERDGLFCAKIFGPIKDYECLCGKYKRLKHRGVICEKCGVEVTLAKVRRERMGHIELAAPTAHIWFLKSLPSRLGMVLDMTLRDIERVLYFEAFVVLEPGMTPLKKSQIMSEDDYLAKCDEYGEGEFVAMMGAEGIRELLRGIDIEKQIEQIRAELQATGSEAKIKKFAKRLKVLEAFQRSGIKPEWMILEVLPVLPPELRPLVPLDGGRFATSDLNDLYRRVINRNNRLKRLLELKAPEIIVRNEKRMLQEAVDSLLDNGRRGKAMTGANKRPLKSLAEMIKGKGGRFRQNLLGKRVDYSGRSVIVVGPTLKLHQCGLPKLMALELFKPFIFHKLETMGIATTIKAAKKEVESQTPVVWDILEEVIREHPVMLNRAPTLHRLGIQAFEPVLIEGKAIQLHPLVCAAFNADFDGDQMAVHVPLSLEAQMEARTLMLASNNVLFPANGDPSIVPSQDVVLGLYYTTRDKINGKGEGMTFADISEVIRAYENKEVELASRVNVRITEYELVDKDAEGDARFAPKITLQATTVGRAILSEILPKGLPFSVLNKPLKKKEISRLINTAFRKCGLRETVIFADKLLQSGFRLATRAGISIAIDDMLVPPAKEKIISEASAKVKEYDKQYMSGLVTDQERYNNVVDIWGAAGDQVGKAMMEQLQHEDVVDRNGNTVKQESFNSIYMMADSGARGSAAQIRQLAGMRGLMAKPDGSIIETPITANFREGLNVLQYFISTHGARKGLADTALKTANSGYLTRRLVDVTQDLVVVEDDCGTSNGVAMKALVEGGEVIEALRDRILGRVTVADVVNPETQETAIETGTLLDEDLVDLIDALGVDEVKVRTPLSCDTRYGLCGKCYGRDLGRGVLVNSGEAVGVIAAQSIGEPGTQLTMRTFHIGGAASRAAVASSVEAKATGTVRFTVTMRYVTNAKGELIVISRSGEALITDDHGRERERHKIPYGATLLVQDGQAIKAGTQLATWDALTRPIVSEYTGTTKFENVEEGVTVAKQMDEVTGLSTLVVIDAKRRTAATKGIRPQVKLLDANGQEVKIPGTDHSVTIGFQVGALITVKDGQQVHVGEVLARIPTESQKTRDITGGLPRVAELFEARSPKDAAVLAEVTGTTSFGKDTKGKQRLVITDLDGNAHEFLIAKEKQVLVHDGQVVNKGEMIVEGPADPHDILRLKGIEELAHYIVDEVQDVYRLQGVKINDKHIEVIVRQMLRRVQVADVGDTKFIPGEQVERSELLDENDRVIAEGKRPATYENLLLGITKASLSTDSFISAASFQETTRVLTEAAIMGKTDDLRGLKENVIVGRLIPAGTGLAYHRARKAREASERERAQAIADEEQSLFIEPPPVVQATTEGEGDNA.

Cys-70, Cys-72, Cys-85, and Cys-88 together coordinate Zn(2+). The Mg(2+) site is built by Asp-461, Asp-463, and Asp-465. Zn(2+) is bound by residues Cys-820, Cys-894, Cys-901, and Cys-904. The segment at 1382-1415 (ERERAQAIADEEQSLFIEPPPVVQATTEGEGDNA) is disordered.

It belongs to the RNA polymerase beta' chain family. As to quaternary structure, the RNAP catalytic core consists of 2 alpha, 1 beta, 1 beta' and 1 omega subunit. When a sigma factor is associated with the core the holoenzyme is formed, which can initiate transcription. Requires Mg(2+) as cofactor. It depends on Zn(2+) as a cofactor.

It catalyses the reaction RNA(n) + a ribonucleoside 5'-triphosphate = RNA(n+1) + diphosphate. In terms of biological role, DNA-dependent RNA polymerase catalyzes the transcription of DNA into RNA using the four ribonucleoside triphosphates as substrates. The sequence is that of DNA-directed RNA polymerase subunit beta' from Cupriavidus pinatubonensis (strain JMP 134 / LMG 1197) (Cupriavidus necator (strain JMP 134)).